We begin with the raw amino-acid sequence, 87 residues long: Small ribosomal subunit protein bS20 (87 aa).

It belongs to the bacterial ribosomal protein bS20 family.

Binds directly to 16S ribosomal RNA. This chain is Small ribosomal subunit protein bS20, found in Lachnoclostridium phytofermentans (strain ATCC 700394 / DSM 18823 / ISDg) (Clostridium phytofermentans).